Reading from the N-terminus, the 256-residue chain is Ribonuclease HII (256 aa).

One can recognise an RNase H type-2 domain in the interval Lys-73–Val-256. Asp-79, Glu-80, and Asp-171 together coordinate a divalent metal cation.

It belongs to the RNase HII family. Mn(2+) is required as a cofactor. The cofactor is Mg(2+).

It localises to the cytoplasm. The enzyme catalyses Endonucleolytic cleavage to 5'-phosphomonoester.. Endonuclease that specifically degrades the RNA of RNA-DNA hybrids. In Acetivibrio thermocellus (strain ATCC 27405 / DSM 1237 / JCM 9322 / NBRC 103400 / NCIMB 10682 / NRRL B-4536 / VPI 7372) (Clostridium thermocellum), this protein is Ribonuclease HII.